The primary structure comprises 366 residues: Neuropeptide Y receptor type 1 (366 aa).

Residues 1-39 lie on the Extracellular side of the membrane; that stretch reads MNFSTYFENLSVPNNISGNITFPISEDCALPLPMIFTLA. Asn2, Asn9, and Asn15 each carry an N-linked (GlcNAc...) asparagine glycan. The helical transmembrane segment at 40–60 threads the bilayer; the sequence is LAYGAVIILGLSGNLALIIII. Topologically, residues 61-82 are cytoplasmic; the sequence is LKQKEMRNVTNILIVNLSFSDL. The helical transmembrane segment at 83 to 103 threads the bilayer; the sequence is LATIMCLPFTLIYTLMDHWIF. The Extracellular segment spans residues 104 to 111; it reads GEVMCKLN. A disulfide bridge links Cys108 with Cys193. Residues 112 to 132 traverse the membrane as a helical segment; it reads EYIQCVSVTVSIFSLVLIAIE. At 133 to 149 the chain is on the cytoplasmic side; that stretch reads RHQLIINPRGWRPNNRH. A helical transmembrane segment spans residues 150–170; sequence ACFGITVIWGFAMACSTPLMM. At 171–203 the chain is on the extracellular side; that stretch reads YSVLTDEPFKNISLDSYIGKYVCLEDFPEDKFR. The N-linked (GlcNAc...) asparagine glycan is linked to Asn181. The helical transmembrane segment at 204 to 224 threads the bilayer; it reads LSYTTLLFILQYLGPLCFIFV. At 225–260 the chain is on the cytoplasmic side; that stretch reads CYTKIFLRLKRRNNMMDKIRDNKYRSSETKRINIML. Residues 261–281 traverse the membrane as a helical segment; the sequence is LSIVVGFALCWLPFFIFNLVF. The Extracellular segment spans residues 282–294; it reads DWNHEAVATCNHN. A helical transmembrane segment spans residues 295–315; the sequence is LLFLICHLTAMISTCVNPIFY. Residues 316-366 are Cytoplasmic-facing; it reads GFLNKNFQRDLQFFFNFCDFRSREDDYETIAMSTMHTDVSKTSLKQASPIA. A lipid anchor (S-palmitoyl cysteine) is attached at Cys333.

Belongs to the G-protein coupled receptor 1 family.

Its subcellular location is the cell membrane. In terms of biological role, receptor for neuropeptide Y and peptide YY. This is Neuropeptide Y receptor type 1 (npy1r) from Xenopus laevis (African clawed frog).